The chain runs to 115 residues: Probable non-functional T cell receptor beta variable 23-1 (115 aa).

A signal peptide spans 1-21 (MGTRLLGCAALCLLAADSFHA). One can recognise an Ig-like domain in the interval 22-115 (KVTQTPGHLV…TALYLCASSQ (94 aa)). An intrachain disulfide couples cysteine 42 to cysteine 111.

Alpha-beta TR is a heterodimer composed of an alpha and beta chain; disulfide-linked. The alpha-beta TR is associated with the transmembrane signaling CD3 coreceptor proteins to form the TR-CD3 (TcR or TCR). The assembly of alpha-beta TR heterodimers with CD3 occurs in the endoplasmic reticulum where a single alpha-beta TR heterodimer associates with one CD3D-CD3E heterodimer, one CD3G-CD3E heterodimer and one CD247 homodimer forming a stable octameric structure. CD3D-CD3E and CD3G-CD3E heterodimers preferentially associate with TR alpha and TR beta chains, respectively. The association of the CD247 homodimer is the last step of TcR assembly in the endoplasmic reticulum and is required for transport to the cell surface.

It is found in the cell membrane. Functionally, probable non-functional open reading frame (ORF) of V region of the variable domain of T cell receptor (TR) beta chain. Non-functional ORF generally cannot participate in the synthesis of a productive T cell receptor (TR) chain due to altered V-(D)-J or switch recombination and/or splicing site (at mRNA level) and/or conserved amino acid change (protein level). Alpha-beta T cell receptors are antigen specific receptors which are essential to the immune response and are present on the cell surface of T lymphocytes. Recognize peptide-major histocompatibility (MH) (pMH) complexes that are displayed by antigen presenting cells (APC), a prerequisite for efficient T cell adaptive immunity against pathogens. Binding of alpha-beta TR to pMH complex initiates TR-CD3 clustering on the cell surface and intracellular activation of LCK that phosphorylates the ITAM motifs of CD3G, CD3D, CD3E and CD247 enabling the recruitment of ZAP70. In turn ZAP70 phosphorylates LAT, which recruits numerous signaling molecules to form the LAT signalosome. The LAT signalosome propagates signal branching to three major signaling pathways, the calcium, the mitogen-activated protein kinase (MAPK) kinase and the nuclear factor NF-kappa-B (NF-kB) pathways, leading to the mobilization of transcription factors that are critical for gene expression and essential for T cell growth and differentiation. The T cell repertoire is generated in the thymus, by V-(D)-J rearrangement. This repertoire is then shaped by intrathymic selection events to generate a peripheral T cell pool of self-MH restricted, non-autoaggressive T cells. Post-thymic interaction of alpha-beta TR with the pMH complexes shapes TR structural and functional avidity. The chain is Probable non-functional T cell receptor beta variable 23-1 from Homo sapiens (Human).